A 339-amino-acid polypeptide reads, in one-letter code: Ketol-acid reductoisomerase (NADP(+)) (339 aa).

The KARI N-terminal Rossmann domain maps to 1 to 182 (MRVYYDRDAD…GGGRSGIIET (182 aa)). NADP(+)-binding positions include 24 to 27 (YGSQ), K48, S51, T53, and 83 to 86 (DELQ). H108 is a catalytic residue. Position 134 (G134) interacts with NADP(+). The KARI C-terminal knotted domain occupies 183–328 (NFKEECETDL…AKLRAMMPWI (146 aa)). Residues D191, E195, E227, and E231 each coordinate Mg(2+). Position 252 (S252) interacts with substrate.

Belongs to the ketol-acid reductoisomerase family. It depends on Mg(2+) as a cofactor.

It catalyses the reaction (2R)-2,3-dihydroxy-3-methylbutanoate + NADP(+) = (2S)-2-acetolactate + NADPH + H(+). It carries out the reaction (2R,3R)-2,3-dihydroxy-3-methylpentanoate + NADP(+) = (S)-2-ethyl-2-hydroxy-3-oxobutanoate + NADPH + H(+). Its pathway is amino-acid biosynthesis; L-isoleucine biosynthesis; L-isoleucine from 2-oxobutanoate: step 2/4. The protein operates within amino-acid biosynthesis; L-valine biosynthesis; L-valine from pyruvate: step 2/4. Involved in the biosynthesis of branched-chain amino acids (BCAA). Catalyzes an alkyl-migration followed by a ketol-acid reduction of (S)-2-acetolactate (S2AL) to yield (R)-2,3-dihydroxy-isovalerate. In the isomerase reaction, S2AL is rearranged via a Mg-dependent methyl migration to produce 3-hydroxy-3-methyl-2-ketobutyrate (HMKB). In the reductase reaction, this 2-ketoacid undergoes a metal-dependent reduction by NADPH to yield (R)-2,3-dihydroxy-isovalerate. The protein is Ketol-acid reductoisomerase (NADP(+)) of Rhizobium meliloti (strain 1021) (Ensifer meliloti).